The primary structure comprises 1384 residues: Protein Gawky (1384 aa).

Disordered regions lie at residues Met1–Gly99, Asn148–Gly227, Thr263–Thr335, and Val447–Ser501. Positions Met1–Thr205 are required for interaction with AGO1. 2 sufficient for miRNA-mediated silencing regions span residues Met1–Ser605 and Ser605–Leu830. Positions His15–Val24 are enriched in polar residues. The segment covering Ser150–Gly171 has biased composition (low complexity). The tract at residues Thr205–Lys490 is minimal N-terminal region required for miRNA-mediated silencing. The span at Asp208–Pro225 shows a compositional bias: basic and acidic residues. Polar residues-rich tracts occupy residues Ala449–Ser475 and Gly485–Ser501. One can recognise a UBA domain in the interval Ile547–Asn588. 7 disordered regions span residues Ala607–Ser626, Gln809–His841, Thr889–Trp942, Glu962–Ser1022, Thr1052–Thr1102, Ser1188–Thr1221, and Gly1318–Arg1368. Residues Gln809–Pro826 show a composition bias toward low complexity. Residues Tyr862–Gly1115 form a not required for interaction with AGO1 or miRNAs or for localization to P-bodies but necessary for miRNA-mediated silencing and for interaction with pAbp region. Positions Thr898–Arg924 are enriched in polar residues. Residues Lys940–Asn1215 form a sufficient for miRNA-mediated silencing region. Low complexity predominate over residues Ser1010–Ser1022. A compositionally biased stretch (polar residues) spans Thr1052–Arg1061. The segment covering Thr1068–Thr1084 has biased composition (low complexity). The RRM domain maps to Ser1117–Glu1189. The span at Ser1188–Pro1203 shows a compositional bias: polar residues. A not required for interaction with AGO1 or miRNAs or for localization to P-bodies but necessary for miRNA-mediated silencing, dissociation from AGO1 and miRNAs and interaction with pAbp region spans residues Pro1200–Asp1384. Residues Thr1211–Gly1220 show a composition bias toward gly residues. Positions Gly1318–Thr1349 are enriched in low complexity. Residues Trp1350–Pro1365 are compositionally biased toward polar residues.

It belongs to the GW182 family. In terms of assembly, component of the miRNA-directed RNA-induced silencing complex (miRISC), composed of at least AGO1 and gw, which bind mature miRNAs and targets the selective destruction of homologous RNAs. Interacts (via N-terminal region) with AGO1 (via Piwi domain); the interaction is essential for localization of AGO1 in P-bodies and for miRNA-mediated silencing. Interacts with pAbp/PABPC1; this interaction interferes with the binding of pAbp to eIF4G and is required for miRNA-mediated silencing. Interacts with CCR4-NOT complex members Not1, Rga/NOT2, twin/CCR4, Pop2 and NOT3/5 and with PAN complex members CG8232/PAN2 and CG11486/PAN3.

It localises to the cytoplasm. The protein resides in the P-body. Its function is as follows. Required for gene silencing mediated by micro-RNAs (miRNAs). Silences both polyadenylated and deadenylated mRNAs. Required for miRNA-mediated translational repression and mRNA decay. Not required for miRNA target recognition. Necessary to initiate but not to maintain silencing. Promotes mRNA deadenylation through the recruitment of the CCR4-NOT and PAN complexes and promotes decapping by the DCP1-DCP2 complex. Dissociates from silenced mRNAs after deadenylation. Required for completion of nuclear divisions during early embryonic development. In Drosophila melanogaster (Fruit fly), this protein is Protein Gawky.